The chain runs to 219 residues: Protein-L-isoaspartate O-methyltransferase 1 (219 aa).

S67 is a catalytic residue.

Belongs to the methyltransferase superfamily. L-isoaspartyl/D-aspartyl protein methyltransferase family.

Its subcellular location is the cytoplasm. It catalyses the reaction [protein]-L-isoaspartate + S-adenosyl-L-methionine = [protein]-L-isoaspartate alpha-methyl ester + S-adenosyl-L-homocysteine. Functionally, catalyzes the methyl esterification of L-isoaspartyl residues in peptides and proteins that result from spontaneous decomposition of normal L-aspartyl and L-asparaginyl residues. It plays a role in the repair and/or degradation of damaged proteins. The sequence is that of Protein-L-isoaspartate O-methyltransferase 1 from Geotalea uraniireducens (strain Rf4) (Geobacter uraniireducens).